Consider the following 430-residue polypeptide: Adenylosuccinate synthetase (430 aa).

GTP is bound by residues 12 to 18 and 40 to 42; these read GDEGKGK and GHT. Asp-13 serves as the catalytic Proton acceptor. Residues Asp-13 and Gly-40 each coordinate Mg(2+). IMP-binding positions include 13-16, 38-41, Thr-130, Arg-144, Gln-224, Thr-239, and Arg-303; these read DEGK and NAGH. Residue His-41 is the Proton donor of the active site. Residue 299-305 coordinates substrate; that stretch reads VVTGRKR. Residues Arg-305, 331–333, and 413–415 contribute to the GTP site; these read KLD and STS.

The protein belongs to the adenylosuccinate synthetase family. In terms of assembly, homodimer. The cofactor is Mg(2+).

The protein localises to the cytoplasm. It catalyses the reaction IMP + L-aspartate + GTP = N(6)-(1,2-dicarboxyethyl)-AMP + GDP + phosphate + 2 H(+). It participates in purine metabolism; AMP biosynthesis via de novo pathway; AMP from IMP: step 1/2. In terms of biological role, plays an important role in the de novo pathway of purine nucleotide biosynthesis. Catalyzes the first committed step in the biosynthesis of AMP from IMP. This is Adenylosuccinate synthetase from Methylobacterium sp. (strain 4-46).